A 277-amino-acid polypeptide reads, in one-letter code: Small ribosomal subunit protein mS23 (277 aa).

2 disordered regions span residues 48 to 85 (APSHPVVKQRMRTVPGKSKPQLEIKSSAGRKQTSKKPS) and 232 to 277 (LAAF…GPPI). A compositionally biased stretch (acidic residues) spans 244 to 269 (ESGESEDEIPLIEEEDAIGASEESET).

This sequence belongs to the mitochondrion-specific ribosomal protein mS23 family. As to quaternary structure, component of the mitochondrial small ribosomal subunit.

It localises to the mitochondrion. The polypeptide is Small ribosomal subunit protein mS23 (RSM25) (Ajellomyces capsulatus (strain NAm1 / WU24) (Darling's disease fungus)).